Reading from the N-terminus, the 715-residue chain is Polyribonucleotide nucleotidyltransferase (715 aa).

Mg(2+)-binding residues include Asp488 and Asp494. In terms of domain architecture, KH spans 555–614 (PKIETIKIPVDKIREVIGSGGKVIREIVEKTGAKIDIGEDGTIKIAAAEQTKIDAAKEWI). In terms of domain architecture, S1 motif spans 624–692 (GQIYTGKVVK…DRGKTRLSMK (69 aa)). A disordered region spans residues 692–715 (KVVDQETGEDLSKSNEKAEEPADA). Residues 701–715 (DLSKSNEKAEEPADA) are compositionally biased toward basic and acidic residues.

Belongs to the polyribonucleotide nucleotidyltransferase family. The cofactor is Mg(2+).

It localises to the cytoplasm. The enzyme catalyses RNA(n+1) + phosphate = RNA(n) + a ribonucleoside 5'-diphosphate. Involved in mRNA degradation. Catalyzes the phosphorolysis of single-stranded polyribonucleotides processively in the 3'- to 5'-direction. This chain is Polyribonucleotide nucleotidyltransferase, found in Phenylobacterium zucineum (strain HLK1).